A 508-amino-acid polypeptide reads, in one-letter code: 6-phosphogluconate dehydrogenase, decarboxylating 2, chloroplastic (508 aa).

A chloroplast-targeting transit peptide spans 1 to 12 (MASPAPAPPAAS). NADP(+)-binding positions include 28–33 (GLATMG), 51–53 (NRT), 95–97 (VQA), and Asn123. Residues Asn123 and 149–151 (SGG) contribute to the substrate site. Lys203 serves as the catalytic Proton acceptor. 206-207 (HN) contributes to the substrate binding site. The active-site Proton donor is the Glu210. Substrate-binding residues include Tyr211, Lys284, Arg311, Arg475, and His481.

The protein belongs to the 6-phosphogluconate dehydrogenase family. Homodimer.

The protein localises to the plastid. It is found in the chloroplast. It carries out the reaction 6-phospho-D-gluconate + NADP(+) = D-ribulose 5-phosphate + CO2 + NADPH. The protein operates within carbohydrate degradation; pentose phosphate pathway; D-ribulose 5-phosphate from D-glucose 6-phosphate (oxidative stage): step 3/3. Functionally, catalyzes the oxidative decarboxylation of 6-phosphogluconate to ribulose 5-phosphate and CO(2), with concomitant reduction of NADP to NADPH. The polypeptide is 6-phosphogluconate dehydrogenase, decarboxylating 2, chloroplastic (G6PGH2) (Oryza sativa subsp. japonica (Rice)).